The chain runs to 164 residues: Putative pre-16S rRNA nuclease (164 aa).

The protein belongs to the YqgF nuclease family.

The protein resides in the cytoplasm. Its function is as follows. Could be a nuclease involved in processing of the 5'-end of pre-16S rRNA. The polypeptide is Putative pre-16S rRNA nuclease (Caulobacter sp. (strain K31)).